The following is a 323-amino-acid chain: Probable oxidoreductase patJ (323 aa).

The disordered stretch occupies residues 291–323 (DQSANGVNGHATGVEAKKKQLGDMTRRRSGAQE). The segment covering 305–316 (EAKKKQLGDMTR) has biased composition (basic and acidic residues).

It belongs to the oxidoreductase OpS7 family.

Its subcellular location is the vacuole lumen. It is found in the cytoplasmic vesicle lumen. It participates in mycotoxin biosynthesis; patulin biosynthesis. In terms of biological role, probable oxidoreductase; part of the gene cluster that mediates the biosynthesis of patulin, an acetate-derived tetraketide mycotoxin produced by several fungal species that shows antimicrobial properties against several bacteria. PatJ acts with patO in the vacuole to convert gentisyl alcohol to isoepoxydon. The pathway begins with the synthesis of 6-methylsalicylic acid by the polyketide synthase (PKS) patK via condensation of acetate and malonate units. The 6-methylsalicylic acid decarboxylase patG then catalyzes the decarboxylation of 6-methylsalicylic acid to yield m-cresol (also known as 3-methylphenol). These first reactions occur in the cytosol. The intermediate m-cresol is then transported into the endoplasmic reticulum where the cytochrome P450 monooxygenase patH converts it to m-hydroxybenzyl alcohol, which is further converted to gentisyl alcohol by the cytochrome P450 monooxygenase patI. The oxidoreductases patJ and patO further convert gentisyl alcohol to isoepoxydon in the vacuole. PatN catalyzes then the transformation of isoepoxydon into phyllostine. The cluster protein patF is responsible for the conversion from phyllostine to neopatulin whereas the alcohol dehydrogenase patD converts neopatulin to E-ascladiol. The steps between isoepoxydon and E-ascladiol occur in the cytosol, and E-ascladiol is probably secreted to the extracellular space by one of the cluster-specific transporters patC or patM. Finally, the secreted patulin synthase patE catalyzes the conversion of E-ascladiol to patulin. This is Probable oxidoreductase patJ from Aspergillus clavatus (strain ATCC 1007 / CBS 513.65 / DSM 816 / NCTC 3887 / NRRL 1 / QM 1276 / 107).